The chain runs to 370 residues: Probable neutral protease 2 homolog TRV_02539 (370 aa).

Positions 1 to 19 are cleaved as a signal peptide; the sequence is MQLVAALAALGALVAPAVA. The propeptide occupies 20–188; that stretch reads YPHAPMNETL…SIHSRALQKR (169 aa). Disulfide bonds link Cys196/Cys267 and Cys274/Cys292. His316 provides a ligand contact to Zn(2+). Glu317 is an active-site residue. 2 residues coordinate Zn(2+): His320 and Asp331.

Belongs to the peptidase M35 family. Zn(2+) serves as cofactor.

Its subcellular location is the secreted. The catalysed reaction is Preferential cleavage of bonds with hydrophobic residues in P1'. Also 3-Asn-|-Gln-4 and 8-Gly-|-Ser-9 bonds in insulin B chain.. Functionally, probable secreted metalloprotease that shows high activities on basic nuclear substrates such as histone and protamine. May be involved in virulence. This is Probable neutral protease 2 homolog TRV_02539 from Trichophyton verrucosum (strain HKI 0517).